The chain runs to 235 residues: UPF0502 protein Bcep18194_B0081 (235 aa).

It belongs to the UPF0502 family.

The sequence is that of UPF0502 protein Bcep18194_B0081 from Burkholderia lata (strain ATCC 17760 / DSM 23089 / LMG 22485 / NCIMB 9086 / R18194 / 383).